Here is a 152-residue protein sequence, read N- to C-terminus: Mitochondrial fission 1 protein (152 aa).

At methionine 1 the chain carries N-acetylmethionine. Topologically, residues 1-122 (MEAVLNELVS…LIDKAMKKDG (122 aa)) are cytoplasmic. Serine 10 is modified (phosphoserine). A TPR repeat occupies 71–104 (RDYVFYLAVGNYRLKEYEKALKYVRGLLQTEPQN). The chain crosses the membrane as a helical span at residues 123–143 (LVGMAIVGGMALGVAGLAGLI). Over 144 to 152 (GLAVSKSKS) the chain is Mitochondrial intermembrane.

Belongs to the FIS1 family. In terms of assembly, interacts with DNM1L/DLP1 through the TPR region; may form part of a larger protein complex at the endoplasmic reticulum-mitochondrial interface during mitochondrial fission. Interacts with MARCHF5. Interacts with MIEF1. Interacts with PEX11A, PEX11B and PEX11G. In terms of processing, ubiquitinated by MARCHF5.

The protein localises to the mitochondrion outer membrane. It is found in the peroxisome membrane. In terms of biological role, involved in the fragmentation of the mitochondrial network and its perinuclear clustering. Plays a minor role in the recruitment and association of the fission mediator dynamin-related protein 1 (DNM1L) to the mitochondrial surface and mitochondrial fission. May not be essential for the assembly of functional fission complexes and the subsequent membrane scission event. Also mediates peroxisomal fission. May act when the products of fission are directed toward mitochondrial homeostasis, mitophagy, or apoptosis. Can induce cytochrome c release from the mitochondrion to the cytosol, ultimately leading to apoptosis. This is Mitochondrial fission 1 protein from Rattus norvegicus (Rat).